The primary structure comprises 227 residues: Orotidine 5'-phosphate decarboxylase (227 aa).

Substrate-binding positions include Asp8, Lys30, 59–68 (DLKLYDIPNT), Thr118, Arg178, Gln187, Gly207, and Arg208. The active-site Proton donor is Lys61.

This sequence belongs to the OMP decarboxylase family. Type 1 subfamily. In terms of assembly, homodimer.

It catalyses the reaction orotidine 5'-phosphate + H(+) = UMP + CO2. The protein operates within pyrimidine metabolism; UMP biosynthesis via de novo pathway; UMP from orotate: step 2/2. Functionally, catalyzes the decarboxylation of orotidine 5'-monophosphate (OMP) to uridine 5'-monophosphate (UMP). The protein is Orotidine 5'-phosphate decarboxylase of Sulfurimonas denitrificans (strain ATCC 33889 / DSM 1251) (Thiomicrospira denitrificans (strain ATCC 33889 / DSM 1251)).